The following is a 160-amino-acid chain: Crossover junction endodeoxyribonuclease RuvC (160 aa).

Residues aspartate 9, glutamate 68, and aspartate 141 contribute to the active site. Mg(2+) is bound by residues aspartate 9, glutamate 68, and aspartate 141.

The protein belongs to the RuvC family. In terms of assembly, homodimer which binds Holliday junction (HJ) DNA. The HJ becomes 2-fold symmetrical on binding to RuvC with unstacked arms; it has a different conformation from HJ DNA in complex with RuvA. In the full resolvosome a probable DNA-RuvA(4)-RuvB(12)-RuvC(2) complex forms which resolves the HJ. Mg(2+) serves as cofactor.

It is found in the cytoplasm. It carries out the reaction Endonucleolytic cleavage at a junction such as a reciprocal single-stranded crossover between two homologous DNA duplexes (Holliday junction).. Functionally, the RuvA-RuvB-RuvC complex processes Holliday junction (HJ) DNA during genetic recombination and DNA repair. Endonuclease that resolves HJ intermediates. Cleaves cruciform DNA by making single-stranded nicks across the HJ at symmetrical positions within the homologous arms, yielding a 5'-phosphate and a 3'-hydroxyl group; requires a central core of homology in the junction. The consensus cleavage sequence is 5'-(A/T)TT(C/G)-3'. Cleavage occurs on the 3'-side of the TT dinucleotide at the point of strand exchange. HJ branch migration catalyzed by RuvA-RuvB allows RuvC to scan DNA until it finds its consensus sequence, where it cleaves and resolves the cruciform DNA. The protein is Crossover junction endodeoxyribonuclease RuvC of Campylobacter jejuni (strain RM1221).